Here is a 98-residue protein sequence, read N- to C-terminus: Large ribosomal subunit protein uL23 (98 aa).

It belongs to the universal ribosomal protein uL23 family. Part of the 50S ribosomal subunit. Contacts protein L29, and trigger factor when it is bound to the ribosome.

In terms of biological role, one of the early assembly proteins it binds 23S rRNA. One of the proteins that surrounds the polypeptide exit tunnel on the outside of the ribosome. Forms the main docking site for trigger factor binding to the ribosome. This Rickettsia felis (strain ATCC VR-1525 / URRWXCal2) (Rickettsia azadi) protein is Large ribosomal subunit protein uL23.